A 541-amino-acid polypeptide reads, in one-letter code: uncharacterized protein (541 aa).

12 consecutive transmembrane segments (helical) span residues W99–Y119, G131–L153, F165–A185, N187–S207, Y224–G244, W256–M276, L325–I345, I367–I387, L409–T429, W439–V459, A472–G494, and S508–G528.

Belongs to the major facilitator superfamily. CAR1 family.

It localises to the membrane. This is an uncharacterized protein from Schizosaccharomyces pombe (strain 972 / ATCC 24843) (Fission yeast).